Reading from the N-terminus, the 78-residue chain is uncharacterized protein (78 aa).

A run of 2 helical transmembrane segments spans residues 13 to 35 (AGVGCVLMLMIIALVVFMLPTGI) and 50 to 72 (GTTFGILMLAALPPLTGAIFYYF).

It is found in the cell membrane. This is an uncharacterized protein from Pasteurella multocida (strain Pm70).